The primary structure comprises 103 residues: MSIAVGMIETRGFPAVVEAADSMVKAARVTLVGYEKIGSGRVTVIVRGDVSEVQASVSAGIEAANRVNGGEVLSTHIIARPHENLEYVLPIRYTEEVEQFRTY.

Positions 4-90 constitute a BMC domain; the sequence is AVGMIETRGF…PHENLEYVLP (87 aa).

This sequence belongs to the bacterial microcompartments protein family. CcmK subfamily. As to quaternary structure, homohexamer, might also make dodecamers. Interacts with full-length CcmM. Forms mixed heterohexamers of all possible stoichiometries with CcmK1, which might form dodecamers. Only very weak interactions with CcmK3 and CcmK4 were seen.

It is found in the carboxysome. One of the shell proteins of the carboxysome, a polyhedral inclusion where RuBisCO (ribulose bisphosphate carboxylase, rbcL-rbcS) is sequestered. The central pore probably regulates metabolite flux. Hexamers make sheets that form the facets of the polyhedral carboxysome. The protein is Carboxysome shell protein CcmK2 of Synechocystis sp. (strain ATCC 27184 / PCC 6803 / Kazusa).